The chain runs to 306 residues: Palmitoyl-protein thioesterase 1 (306 aa).

Residues 1–27 (MASSCSRRLLAAALLPWCCAAWALGHL) form the signal peptide. Cystine bridges form between C45–C46, C96–C128, and C152–C160. S115 is an active-site residue. N-linked (GlcNAc...) asparagine glycans are attached at residues N197, N212, and N232. Catalysis depends on residues D233 and H289.

This sequence belongs to the palmitoyl-protein thioesterase family. As to quaternary structure, interacts with CLN5, ATP5F1A and ATP5F1B. In terms of processing, glycosylated. In terms of tissue distribution, highest level in testis and kidney, lower in heart, brain and lung and lowest in skeletal muscle.

Its subcellular location is the lysosome. The protein resides in the secreted. The protein localises to the golgi apparatus. It localises to the endoplasmic reticulum. The enzyme catalyses S-hexadecanoyl-L-cysteinyl-[protein] + H2O = L-cysteinyl-[protein] + hexadecanoate + H(+). The catalysed reaction is hexadecanoyl-CoA + H2O = hexadecanoate + CoA + H(+). It carries out the reaction S-hexadecanoyl-N-acetylcysteamine + H2O = N-acetylcysteamine + hexadecanoate + H(+). It catalyses the reaction S-hexadecanoyl-N-acetylcysteine methyl ester + H2O = N-acetylcysteine methyl ester + hexadecanoate + H(+). Has thioesterase activity against fatty acid thioesters with 14 -18 carbons, including palmitoyl-CoA, S-palmitoyl-N-acetylcysteamine, and palmitoylated proteins. In contrast to PPT2, PPT1 can hydrolyze palmitoylated proteins and palmitoylcysteine. The polypeptide is Palmitoyl-protein thioesterase 1 (Ppt1) (Mus musculus (Mouse)).